A 94-amino-acid chain; its full sequence is UPF0235 protein Dred_0717 (94 aa).

The protein belongs to the UPF0235 family.

The protein is UPF0235 protein Dred_0717 of Desulforamulus reducens (strain ATCC BAA-1160 / DSM 100696 / MI-1) (Desulfotomaculum reducens).